Consider the following 412-residue polypeptide: Serine hydroxymethyltransferase (412 aa).

(6S)-5,6,7,8-tetrahydrofolate is bound by residues Leu120 and 124–126 (GHL). N6-(pyridoxal phosphate)lysine is present on Lys229. 352–354 (SPF) contacts (6S)-5,6,7,8-tetrahydrofolate.

Belongs to the SHMT family. Homodimer. The cofactor is pyridoxal 5'-phosphate.

Its subcellular location is the cytoplasm. The enzyme catalyses (6R)-5,10-methylene-5,6,7,8-tetrahydrofolate + glycine + H2O = (6S)-5,6,7,8-tetrahydrofolate + L-serine. Its pathway is one-carbon metabolism; tetrahydrofolate interconversion. The protein operates within amino-acid biosynthesis; glycine biosynthesis; glycine from L-serine: step 1/1. Functionally, catalyzes the reversible interconversion of serine and glycine with tetrahydrofolate (THF) serving as the one-carbon carrier. This reaction serves as the major source of one-carbon groups required for the biosynthesis of purines, thymidylate, methionine, and other important biomolecules. Also exhibits THF-independent aldolase activity toward beta-hydroxyamino acids, producing glycine and aldehydes, via a retro-aldol mechanism. The protein is Serine hydroxymethyltransferase of Ruminiclostridium cellulolyticum (strain ATCC 35319 / DSM 5812 / JCM 6584 / H10) (Clostridium cellulolyticum).